Consider the following 89-residue polypeptide: Protein S100-A8 (89 aa).

N-acetylalanine is present on Ala-2. EF-hand domains are found at residues 13 to 48 (IEVY…FVQN) and 46 to 81 (VQNK…VGVA). Residues His-17 and His-27 each coordinate Zn(2+). Asp-33 provides a ligand contact to Ca(2+). Cys-42 is modified (S-nitrosocysteine). Ca(2+)-binding residues include Asp-59, Asn-61, Asp-63, and Glu-70. His-83 provides a ligand contact to Zn(2+).

The protein belongs to the S-100 family. In terms of assembly, homodimer. Preferentially exists as a heterodimer or heterotetramer with S100A9 known as calprotectin (S100A8/A9). S100A8 interacts with AGER, ATP2A2 and with the heterodimeric complex formed by TLR4 and LY96. Calprotectin (S100A8/9) interacts with CEACAM3 and tubulin filaments in a calcium-dependent manner. Heterotetrameric calprotectin (S100A8/A9) interacts with ANXA6 and associates with tubulin filaments in activated monocytes. S100A8 and calprotectin (S100A8/9) interact with NCF2/P67PHOX, RAC1 and RAC2. Calprotectin (S100A8/9) interacts with CYBA and CYBB. Calprotectin (S100A8/9) interacts with NOS2 to form the iNOS-S100A8/A9 transnitrosylase complex. Calprotectin (S100A8/9) interacts with CD69.

It is found in the secreted. The protein resides in the cytoplasm. It localises to the cytoskeleton. Its subcellular location is the cell membrane. S100A8 is a calcium- and zinc-binding protein which plays a prominent role in the regulation of inflammatory processes and immune response. It can induce neutrophil chemotaxis and adhesion. Predominantly found as calprotectin (S100A8/A9) which has a wide plethora of intra- and extracellular functions. The intracellular functions include: facilitating leukocyte arachidonic acid trafficking and metabolism, modulation of the tubulin-dependent cytoskeleton during migration of phagocytes and activation of the neutrophilic NADPH-oxidase. Also participates in regulatory T-cell differentiation together with CD69. Activates NADPH-oxidase by facilitating the enzyme complex assembly at the cell membrane, transferring arachidonic acid, an essential cofactor, to the enzyme complex and S100A8 contributes to the enzyme assembly by directly binding to NCF2/P67PHOX. The extracellular functions involve pro-inflammatory, antimicrobial, oxidant-scavenging and apoptosis-inducing activities. Its pro-inflammatory activity includes recruitment of leukocytes, promotion of cytokine and chemokine production, and regulation of leukocyte adhesion and migration. Acts as an alarmin or a danger associated molecular pattern (DAMP) molecule and stimulates innate immune cells via binding to pattern recognition receptors such as Toll-like receptor 4 (TLR4) and receptor for advanced glycation endproducts (AGER). Binding to TLR4 and AGER activates the MAP-kinase and NF-kappa-B signaling pathways resulting in the amplification of the pro-inflammatory cascade. Has antimicrobial activity towards bacteria and fungi and exerts its antimicrobial activity probably via chelation of Zn(2+) which is essential for microbial growth. Can induce cell death via autophagy and apoptosis and this occurs through the cross-talk of mitochondria and lysosomes via reactive oxygen species (ROS) and the process involves BNIP3. Can regulate neutrophil number and apoptosis by an anti-apoptotic effect; regulates cell survival via ITGAM/ITGB and TLR4 and a signaling mechanism involving MEK-ERK. Its role as an oxidant scavenger has a protective role in preventing exaggerated tissue damage by scavenging oxidants. The iNOS-S100A8/A9 transnitrosylase complex is proposed to direct selective inflammatory stimulus-dependent S-nitrosylation of multiple targets such as GAPDH, ANXA5, EZR, MSN and VIM by recognizing a [IL]-x-C-x-x-[DE] motif; S100A8 seems to contribute to S-nitrosylation site selectivity. In Rattus norvegicus (Rat), this protein is Protein S100-A8 (S100a8).